The following is a 142-amino-acid chain: Small ribosomal subunit protein uS12 (142 aa).

The protein belongs to the universal ribosomal protein uS12 family. As to quaternary structure, part of the 30S ribosomal subunit.

In terms of biological role, with S4 and S5 plays an important role in translational accuracy. Located at the interface of the 30S and 50S subunits. This chain is Small ribosomal subunit protein uS12, found in Methanoculleus marisnigri (strain ATCC 35101 / DSM 1498 / JR1).